The chain runs to 101 residues: Small ribosomal subunit protein bS18c (101 aa).

This sequence belongs to the bacterial ribosomal protein bS18 family. Component of the chloroplast small ribosomal subunit (SSU). Mature 70S chloroplast ribosomes of higher plants consist of a small (30S) and a large (50S) subunit. The 30S small subunit contains 1 molecule of ribosomal RNA (16S rRNA) and 24 different proteins. The 50S large subunit contains 3 rRNA molecules (23S, 5S and 4.5S rRNA) and 33 different proteins.

The protein localises to the plastid. The protein resides in the chloroplast. Its function is as follows. Component of the chloroplast ribosome (chloro-ribosome), a dedicated translation machinery responsible for the synthesis of chloroplast genome-encoded proteins, including proteins of the transcription and translation machinery and components of the photosynthetic apparatus. This chain is Small ribosomal subunit protein bS18c (RPS18), found in Spinacia oleracea (Spinach).